The primary structure comprises 108 residues: UPF0060 membrane protein YnfA (108 aa).

At 1–5 (MLKTT) the chain is on the periplasmic side. Residues 6 to 26 (LLFFVTALCEIIGCFLPWLWL) form a helical membrane-spanning segment. Topologically, residues 27–30 (KRGA) are cytoplasmic. The chain crosses the membrane as a helical span at residues 31–51 (SVWWLLPAAASLALFVWLLTL). Residues 52 to 60 (HPAASGRVY) lie on the Periplasmic side of the membrane. Residues 61 to 81 (AAYGGVYVCTALLWLRVVDGV) form a helical membrane-spanning segment. Residues 82 to 84 (RLT) lie on the Cytoplasmic side of the membrane. A helical transmembrane segment spans residues 85–105 (VYDWCGALIALCGMLIIVVGW). Topologically, residues 106-108 (GRT) are periplasmic.

Belongs to the UPF0060 family.

The protein localises to the cell inner membrane. This is UPF0060 membrane protein YnfA from Salmonella agona (strain SL483).